The primary structure comprises 140 residues: Profilin-2 (140 aa).

At alanine 2 the chain carries N-acetylalanine.

The protein belongs to the profilin family. Occurs in many kinds of cells as a complex with monomeric actin in a 1:1 ratio. Interacts with PFN2. In terms of assembly, interacts with ACTMAP (via N-terminus); the interaction may facilitate efficient cleavage of the acetylated N-terminus of immature actin by ACTMAP. As to expression, highly expressed in brain, skeletal muscle and kidney and less strongly in heart, placenta, lung and liver.

It localises to the cytoplasm. The protein localises to the cytoskeleton. Functionally, binds to actin and affects the structure of the cytoskeleton. At high concentrations, profilin prevents the polymerization of actin, whereas it enhances it at low concentrations. By binding to PIP2, it inhibits the formation of IP3 and DG. This chain is Profilin-2 (PFN2), found in Homo sapiens (Human).